The sequence spans 431 residues: Na(+)-translocating NADH-quinone reductase subunit F (431 aa).

A helical transmembrane segment spans residues 10 to 30; it reads ISIASLVFCVIGLILSGIILI. One can recognise a 2Fe-2S ferredoxin-type domain in the interval 41-133; sequence CKLKINDDDS…DMCLEIEERY (93 aa). Positions 76, 82, 85, and 117 each coordinate [2Fe-2S] cluster. Residues 136 to 286 form the FAD-binding FR-type domain; the sequence is ASSWEGTVVS…SGPYGESFMK (151 aa).

This sequence belongs to the NqrF family. In terms of assembly, composed of six subunits; NqrA, NqrB, NqrC, NqrD, NqrE and NqrF. The cofactor is [2Fe-2S] cluster. FAD serves as cofactor.

It localises to the cell inner membrane. The enzyme catalyses a ubiquinone + n Na(+)(in) + NADH + H(+) = a ubiquinol + n Na(+)(out) + NAD(+). In terms of biological role, NQR complex catalyzes the reduction of ubiquinone-1 to ubiquinol by two successive reactions, coupled with the transport of Na(+) ions from the cytoplasm to the periplasm. The first step is catalyzed by NqrF, which accepts electrons from NADH and reduces ubiquinone-1 to ubisemiquinone by a one-electron transfer pathway. This is Na(+)-translocating NADH-quinone reductase subunit F from Chlamydia caviae (strain ATCC VR-813 / DSM 19441 / 03DC25 / GPIC) (Chlamydophila caviae).